We begin with the raw amino-acid sequence, 1785 residues long: 1,3-beta-glucan synthase component FKS3 (1785 aa).

8 helical membrane-spanning segments follow: residues 337–357 (FWIIHFAPFWFFTTFNSPTLY), 375–395 (LSVIAFGGTIACLVQILATVF), 415–435 (IGLLFCLAINLGPSVYVLGFF), 444–464 (AYIVSIVQLIIAFLTTFFFAV), 508–528 (LWVFVYLAKYIESYFFLTLSL), 547–567 (YLLGPILCKWQAKITLVLMLL), 572–592 (LFFLDTYLWYIICNCIFSIVL), and 712–732 (LATPISEPVPVDCMPTFTVLV). Basic and acidic residues-rich tracts occupy residues 791–801 (ESSHDEDRLEI) and 815–824 (DHTESRKLPT). Residues 791–824 (ESSHDEDRLEIPDALYDPRSSPLSDHTESRKLPT) form a disordered region. Residues Asn844, Asn874, Asn955, Asn1002, and Asn1170 are each glycosylated (N-linked (GlcNAc...) asparagine). 3 helical membrane passes run 1215-1235 (LFISFSVQLFFVLLLNLGALN), 1268-1288 (VSIFVLSIFIVFFIAFAPLLI), and 1303-1323 (FLHHLLSMAPLFEVFVCQVYS). An N-linked (GlcNAc...) asparagine glycan is attached at Asn1360. The next 5 helical transmembrane spans lie at 1370 to 1390 (FFMLLFAIISMWQPALLWFWI), 1394 to 1414 (SMCFAPFIFNPHQFAFMDFFI), 1475 to 1495 (FAELFLPFCVFLFNFTAFSFI), 1514 to 1534 (LLVTFLPIFLNSIVLFLLFWV), and 1549 to 1569 (AGAVIAFIAHTFSVLVYLLDF). The N-linked (GlcNAc...) asparagine glycan is linked to Asn1579. The next 3 helical transmembrane spans lie at 1585–1605 (ILLITCINMHLILFKVFTTIF), 1655–1675 (FFLGHFLLFIQTPIILLPFID), and 1713–1733 (FSLYFVMLGVLLFMLIAPFFA). Asn1761 is a glycosylation site (N-linked (GlcNAc...) asparagine).

The protein belongs to the glycosyltransferase 48 family. In terms of processing, N-glycosylated.

Its subcellular location is the mitochondrion. The protein localises to the membrane. It catalyses the reaction [(1-&gt;3)-beta-D-glucosyl](n) + UDP-alpha-D-glucose = [(1-&gt;3)-beta-D-glucosyl](n+1) + UDP + H(+). In terms of biological role, required for spore wall assembly. This chain is 1,3-beta-glucan synthase component FKS3 (FKS3), found in Saccharomyces cerevisiae (strain ATCC 204508 / S288c) (Baker's yeast).